A 432-amino-acid chain; its full sequence is Glutamate-1-semialdehyde 2,1-aminomutase (432 aa).

Residue K272 is modified to N6-(pyridoxal phosphate)lysine.

This sequence belongs to the class-III pyridoxal-phosphate-dependent aminotransferase family. HemL subfamily. In terms of assembly, homodimer. Pyridoxal 5'-phosphate is required as a cofactor.

It is found in the cytoplasm. It carries out the reaction (S)-4-amino-5-oxopentanoate = 5-aminolevulinate. It functions in the pathway porphyrin-containing compound metabolism; protoporphyrin-IX biosynthesis; 5-aminolevulinate from L-glutamyl-tRNA(Glu): step 2/2. The protein operates within porphyrin-containing compound metabolism; chlorophyll biosynthesis. This chain is Glutamate-1-semialdehyde 2,1-aminomutase, found in Nostoc punctiforme (strain ATCC 29133 / PCC 73102).